Consider the following 349-residue polypeptide: GDSL esterase/lipase At1g58525 (349 aa).

An N-terminal signal peptide occupies residues 1–19; sequence MKLQILLLALVLIAVEANA. Asn-25 carries N-linked (GlcNAc...) asparagine glycosylation. Ser-37 (nucleophile) is an active-site residue. A glycan (N-linked (GlcNAc...) asparagine) is linked at Asn-316. Catalysis depends on residues Asp-324 and His-327.

Belongs to the 'GDSL' lipolytic enzyme family.

It localises to the secreted. The protein is GDSL esterase/lipase At1g58525 of Arabidopsis thaliana (Mouse-ear cress).